The sequence spans 95 residues: MLHTLHRSPWLTDFAALLRLLSEGDELLLLQDGVTAAVDGNRYLESLRNAPIKVYALNEDLIARGLIGQISNDIIPIDYTDFVRLTVKHSSQMAW.

The protein belongs to the DsrH/TusB family. In terms of assembly, heterohexamer, formed by a dimer of trimers. The hexameric TusBCD complex contains 2 copies each of TusB, TusC and TusD. The TusBCD complex interacts with TusE.

The protein resides in the cytoplasm. Part of a sulfur-relay system required for 2-thiolation of 5-methylaminomethyl-2-thiouridine (mnm(5)s(2)U) at tRNA wobble positions. In Shigella dysenteriae serotype 1 (strain Sd197), this protein is Protein TusB.